Consider the following 313-residue polypeptide: Leucine zipper protein 4 (313 aa).

Positions 1 to 119 (MASFRKLTLS…PLIEQEKCSD (119 aa)) are interaction with DDX39B/UAP56. 2 disordered regions span residues 1 to 238 (MASF…QGDL) and 290 to 313 (QSGR…TITT). The UAP56-binding motif (UBM); required for proper nuclear localization signature appears at 22 to 40 (KVNFLDMSLDDIIIYKELE). A compositionally biased stretch (basic and acidic residues) spans 34–60 (IIYKELEGTNAEEEKNKRQNHSKKESP). The segment at 51–80 (RQNHSKKESPSRQQSKAHRHRHRRGYSRCR) is arg-rich; required for RNA-binding. Basic residues predominate over residues 65–77 (SKAHRHRHRRGYS). Over residues 81 to 92 (SNSEEGNHDKKP) the composition is skewed to basic and acidic residues. The span at 126 to 141 (EKNQGQSEGNQHQSEG) shows a compositional bias: polar residues. A compositionally biased stretch (basic and acidic residues) spans 142–168 (NPDKSEESQGQPEENHHSERSRNHLER). Residues 169 to 179 (SLSQSDRSQGQ) show a composition bias toward polar residues. Residues 178–236 (GQLKRHHPQYERSHGQYKRSHGQSERSHGHSERSHGHSERSHGHSERSHGHSKRSRSQG) are RS-containing His-rich (RS-H); necessary for nuclear localization. A compositionally biased stretch (basic and acidic residues) spans 199-226 (GQSERSHGHSERSHGHSERSHGHSERSH). Ser-234 carries the phosphoserine modification. A leucine-zipper; required for RNA-binding and for its relocalization to the cytoplasm during cell division region spans residues 238 to 287 (LVDTQSDLIATQRDLIATQKDLIATQRDLIATQRDLIVTQRDLVATERDL). Positions 241-313 (TQSDLIATQR…YSTGKNTITT (73 aa)) are interaction with NXF1. Residues 304–313 (YSTGKNTITT) show a composition bias toward polar residues.

In terms of assembly, interacts with NXF1, NXF2, THOC1, THOC5, DDX39B/UAP56 and SRRT. In terms of tissue distribution, expressed specifically in testis. Also expressed in a wide variety of cancer types, but particularly high levels of expression observed in melanoma cells.

It localises to the nucleus. Its subcellular location is the cytoplasm. Functionally, export adapter involved in mRNA nuclear export in cancer cells. Binds and enhances the RNA-binding activity of the nuclear RNA export factor NXF1. Can restore mRNA export function in cells compromised by loss of mRNA export adapters. The sequence is that of Leucine zipper protein 4 (LUZP4) from Homo sapiens (Human).